The primary structure comprises 439 residues: Methylenetetrahydrofolate--tRNA-(uracil-5-)-methyltransferase TrmFO (439 aa).

8–13 is a binding site for FAD; it reads GGGLAG.

Belongs to the MnmG family. TrmFO subfamily. FAD serves as cofactor.

It localises to the cytoplasm. The enzyme catalyses uridine(54) in tRNA + (6R)-5,10-methylene-5,6,7,8-tetrahydrofolate + NADH + H(+) = 5-methyluridine(54) in tRNA + (6S)-5,6,7,8-tetrahydrofolate + NAD(+). The catalysed reaction is uridine(54) in tRNA + (6R)-5,10-methylene-5,6,7,8-tetrahydrofolate + NADPH + H(+) = 5-methyluridine(54) in tRNA + (6S)-5,6,7,8-tetrahydrofolate + NADP(+). Catalyzes the folate-dependent formation of 5-methyl-uridine at position 54 (M-5-U54) in all tRNAs. The chain is Methylenetetrahydrofolate--tRNA-(uracil-5-)-methyltransferase TrmFO from Dictyoglomus turgidum (strain DSM 6724 / Z-1310).